Reading from the N-terminus, the 106-residue chain is Urease subunit beta (106 aa).

The protein belongs to the urease beta subunit family. Heterotrimer of UreA (gamma), UreB (beta) and UreC (alpha) subunits. Three heterotrimers associate to form the active enzyme.

It is found in the cytoplasm. It catalyses the reaction urea + 2 H2O + H(+) = hydrogencarbonate + 2 NH4(+). It participates in nitrogen metabolism; urea degradation; CO(2) and NH(3) from urea (urease route): step 1/1. The protein is Urease subunit beta of Prochlorococcus marinus subsp. pastoris (strain CCMP1986 / NIES-2087 / MED4).